The following is a 558-amino-acid chain: Atlastin-1 (558 aa).

A disordered region spans residues 1-28 (MAKSRRDRNSWGGFSEKSSDWSSEEEEP). The tract at residues 1-34 (MAKSRRDRNSWGGFSEKSSDWSSEEEEPVRKAGP) is N-terminal hypervariable region (HVR). The Cytoplasmic portion of the chain corresponds to 1–449 (MAKSRRDRNS…NIFHAARTPA (449 aa)). Ser10, Ser22, and Ser23 each carry phosphoserine. The region spanning 64–309 (DKEVVAVSVA…LIPWLLSPER (246 aa)) is the GB1/RHD3-type G domain. GDP-binding residues include Arg77, Lys78, Gly79, Lys80, Ser81, Phe82, Gln148, Arg217, Asp218, Val276, and Asn279. Positions 77, 78, 79, 80, 81, and 82 each coordinate GTP. Ser81 serves as a coordination point for Mg(2+). 3 residues coordinate GTP: Arg217, Asp218, and Val276. Residues 347 to 438 (MLQATAEANN…YIQYIKHNDS (92 aa)) form a 3HB (three-helix bundle) domain region. Lys395 carries the post-translational modification N6-acetyllysine. Residues 412-439 (EFSRRYLQQLESEIDELYIQYIKHNDSK) adopt a coiled-coil conformation. The segment at 439–447 (KNIFHAART) is linker. Residues 450–470 (TLFVVIFITYVIAGVTGFIGL) traverse the membrane as a helical segment. Asp471 is a topological domain (lumenal). The helical transmembrane segment at 472 to 492 (IIASLCNMIMGLTLITLCTWA) threads the bilayer. The Cytoplasmic segment spans residues 493-558 (YIRYSGEYRE…PTQQPEKKKI (66 aa)). Residues 521–558 (NEALYKLYSAAATHRHLCHQAFPAPKSEPTQQPEKKKI) are autoinhibitory domain.

This sequence belongs to the TRAFAC class dynamin-like GTPase superfamily. GB1/RHD3 GTPase family. GB1 subfamily. As to quaternary structure, monomeric and homodimeric. The homodimer, transiently formed by two molecules on opposing membranes, is the active form mediating ER membrane fusion. Interacts with REEP1, REEP5, RTN3 and RTN4 (via the transmembrane region); these proteins are involved in endoplasmic reticulum tubular network organization. Interacts with ZFYVE27; both proteins are involved in endoplasmic reticulum tubular network organization. Interacts with ARL6IP1; both proteins are involved in endoplasmic reticulum tubular network organization. Interacts with SPAST; the interaction is direct, could recruit SPAST to Golgi membranes. Interacts (via N-terminal region) with MAP4K4 (via CNH regulatory domain). May interact with TMED2. Interacts with CPT1C. In terms of processing, phosphorylated. Phosphorylation, by different kinases, of the N-terminal hypervariable region (HVR) regulates the ATL1-mediated membrane tethering step.

The protein resides in the endoplasmic reticulum membrane. The protein localises to the golgi apparatus membrane. It is found in the cell projection. Its subcellular location is the axon. The catalysed reaction is GTP + H2O = GDP + phosphate + H(+). In terms of biological role, atlastin-1 (ATL1) is a membrane-anchored GTPase that mediates the GTP-dependent fusion of endoplasmic reticulum (ER) membranes, maintaining the continuous ER network. It facilitates the formation of three-way junctions where ER tubules intersect. Two atlastin-1 on neighboring ER tubules bind GTP and form loose homodimers through the GB1/RHD3-type G domains and 3HB regions. Upon GTP hydrolysis, the 3HB regions tighten, pulling the membranes together to drive their fusion. After fusion, the homodimer disassembles upon release of inorganic phosphate (Pi). Subsequently, GDP dissociates, resetting the monomers to a conformation ready for a new fusion cycle. May also regulate more or less directly Golgi biogenesis. Indirectly regulates axonal development. The protein is Atlastin-1 of Mus musculus (Mouse).